The sequence spans 366 residues: Tudor domain-containing protein 10 (366 aa).

An RRM domain is found at 34–107 (TEVYVGNLPL…RKLFVNTSKR (74 aa)). Positions 210 to 317 (FWAMHVTEAL…PLTQPFMLEK (108 aa)) constitute a Tudor domain. Residues 216-237 (TEALHQNMQALFSTLAQAEEQQ) are a coiled coil.

In Homo sapiens (Human), this protein is Tudor domain-containing protein 10 (TDRD10).